The primary structure comprises 647 residues: DEAD-box ATP-dependent RNA helicase 18 (647 aa).

Positions 23–51 (FSELSPALSPEVVKALKGGGFRRCTPVQA) match the Q motif motif. One can recognise a Helicase ATP-binding domain in the interval 54–232 (IPLLLSHKDV…KAGLRNPVRV (179 aa)). Residue 67–74 (AATGSGKT) participates in ATP binding. Positions 180-183 (DEAD) match the DEAD box motif. In terms of domain architecture, Helicase C-terminal spans 274 to 430 (QLVDFLVQNN…DIVPQIRSAA (157 aa)). The stretch at 507 to 582 (KYKDKAREKQ…RLLKKLKRGV (76 aa)) forms a coiled coil. Positions 512–545 (AREKQRQKTLKRKAEELALRPEIEKRRKAPEKPE) are enriched in basic and acidic residues. Disordered regions lie at residues 512 to 565 (AREK…KEDM) and 590 to 647 (KLTG…TRRR). Residues 596 to 610 (ESDDDDSSDGGDSDL) are compositionally biased toward acidic residues. Positions 619–633 (KVLKKIKQKGKAKGS) are enriched in basic residues.

Belongs to the DEAD box helicase family. DDX55/SPB4 subfamily. As to quaternary structure, interacts with BRI1. Phosphorylated.

It carries out the reaction ATP + H2O = ADP + phosphate + H(+). This is DEAD-box ATP-dependent RNA helicase 18 from Oryza sativa subsp. japonica (Rice).